Consider the following 568-residue polypeptide: Protein yellow (568 aa).

The signal sequence occupies residues 1–28; it reads MHAQDKGGILPALSLLLIAVAMVSPSQA. Residues asparagine 151 and asparagine 222 are each glycosylated (N-linked (GlcNAc...) asparagine).

This sequence belongs to the major royal jelly protein family.

The protein localises to the secreted. Functionally, controls the pigmentation pattern of the adult cuticle and larval mouth parts. This Drosophila madeirensis (Fruit fly) protein is Protein yellow (y).